A 1896-amino-acid polypeptide reads, in one-letter code: Plexin-A1 (1896 aa).

An N-terminal signal peptide occupies residues 1–26; the sequence is MPLPPRSLQVLLLLLLLLLLLPGMWA. In terms of domain architecture, Sema spans 27–512; that stretch reads EAGLPRAGGG…TEKQVTRVPV (486 aa). The Extracellular portion of the chain corresponds to 27 to 1244; it reads EAGLPRAGGG…VYSDSLLTLP (1218 aa). An N-linked (GlcNAc...) asparagine glycan is attached at Asn77. 10 cysteine pairs are disulfide-bonded: Cys95-Cys104, Cys130-Cys138, Cys286-Cys407, Cys302-Cys358, Cys376-Cys395, Cys515-Cys532, Cys521-Cys563, Cys524-Cys541, Cys535-Cys547, and Cys598-Cys617. Asn660, Asn672, and Asn701 each carry an N-linked (GlcNAc...) asparagine glycan. 4 consecutive IPT/TIG domains span residues 864–959, 961–1045, 1048–1147, and 1150–1236; these read PKIL…FTFV, PTFY…YNYT, PTIL…FLYY, and PVLE…LQVY. A glycan (N-linked (GlcNAc...) asparagine) is linked at Asn1043. Asn1187 and Asn1212 each carry an N-linked (GlcNAc...) asparagine glycan. A helical transmembrane segment spans residues 1245–1265; it reads AIVGIGGGGGLLLLVIVAVLI. Positions 1264-1317 form a coiled coil; sequence LIAYKRKSRDADRTLKRLQLQMDNLESRVALECKEAFAELQTDIHELTNDLDGA. The Cytoplasmic segment spans residues 1266-1896; that stretch reads AYKRKSRDAD…QVVDTMALSS (631 aa).

This sequence belongs to the plexin family. As to quaternary structure, interacts directly with NRP1 and NRP2. Interacts with PLXN1B. Interacts with FARP2, RND1 and KDR/VEGFR2. Binding of SEMA3A leads to dissociation of FARP2. Interacts with CRMP1, DPYSL2/CRMP2, DPYSL3/CRMP3 and DPYSL4/CRMP4. Interacts (via TIG domains) with TREM2; the interaction mediates SEMA6D binding and signaling through TYROBP. Detected in fetal brain, lung, liver and kidney.

It localises to the cell membrane. Coreceptor for SEMA3A, SEMA3C, SEMA3F and SEMA6D. Necessary for signaling by class 3 semaphorins and subsequent remodeling of the cytoskeleton. Plays a role in axon guidance, invasive growth and cell migration. Class 3 semaphorins bind to a complex composed of a neuropilin and a plexin. The plexin modulates the affinity of the complex for specific semaphorins, and its cytoplasmic domain is required for the activation of down-stream signaling events in the cytoplasm. Acts as coreceptor of TREM2 for SEMA6D in dendritic cells and is involved in the generation of immune responses and skeletal homeostasis. The sequence is that of Plexin-A1 from Homo sapiens (Human).